Here is an 84-residue protein sequence, read N- to C-terminus: Sec-independent protein translocase protein TatA (84 aa).

A helical transmembrane segment spans residues 1–21 (MGGISIWQLLIVAVIVVLLFG). Composition is skewed to basic and acidic residues over residues 42–55 (AMSDDDAKQDKTSQ) and 64–84 (IADKQGEAKKEDAKSQDKEQV). The interval 42–84 (AMSDDDAKQDKTSQDADFTAKSIADKQGEAKKEDAKSQDKEQV) is disordered.

This sequence belongs to the TatA/E family. As to quaternary structure, the Tat system comprises two distinct complexes: a TatABC complex, containing multiple copies of TatA, TatB and TatC subunits, and a separate TatA complex, containing only TatA subunits. Substrates initially bind to the TatABC complex, which probably triggers association of the separate TatA complex to form the active translocon.

It is found in the cell inner membrane. Part of the twin-arginine translocation (Tat) system that transports large folded proteins containing a characteristic twin-arginine motif in their signal peptide across membranes. TatA could form the protein-conducting channel of the Tat system. This is Sec-independent protein translocase protein TatA from Salmonella typhi.